The following is a 314-amino-acid chain: uncharacterized protein (314 aa).

Composition is skewed to basic residues over residues 1-16 and 49-65; these read MAGNSKRRGAVRKAGT and AAKRAAKAAKQQQRRPA. The interval 1 to 73 is disordered; it reads MAGNSKRRGA…PARKTDETEL (73 aa). S-adenosyl-L-methionine-binding residues include Gly266, Ile286, and Leu295.

The protein belongs to the class IV-like SAM-binding methyltransferase superfamily. RNA methyltransferase TrmH family.

This is an uncharacterized protein from Mycobacterium sp. (strain KMS).